A 101-amino-acid polypeptide reads, in one-letter code: Capsid assembly scaffolding protein (101 aa).

The tract at residues 1–24 (MPMERDSHEEILNKLNDPELEHSE) is disordered. The stretch at 79–99 (EEIKQEELSETITIEDLEKQA) forms a coiled coil.

This sequence belongs to the phi29likevirus scaffolding protein family. As to quaternary structure, homodimer. Interacts non-specifically with DNA; probably binds DNA in the early stages of DNA packaging.

In terms of biological role, scaffolding protein involved in the icosahedric procapsid assembly. Coassembles with the capsid proteins to form the procapsid. The scaffolding protein is found within the capsid as a serie of concentric shells. During DNA packaging, the scaffolding protein molecules are released from the procapsid. The protein is Capsid assembly scaffolding protein (7) of Bacillus subtilis (Bacteriophage B103).